Here is a 340-residue protein sequence, read N- to C-terminus: Ketol-acid reductoisomerase (NADP(+)) (340 aa).

Residues 1 to 182 enclose the KARI N-terminal Rossmann domain; that stretch reads MRVYYDRDCD…GGGRSGIIET (182 aa). Residues 24 to 27, R48, S51, S53, and 83 to 86 contribute to the NADP(+) site; these read YGSQ and DELQ. The active site involves H108. G134 lines the NADP(+) pocket. The KARI C-terminal knotted domain occupies 183 to 329; the sequence is NFRQECETDL…EKLRGMMPWI (147 aa). Residues D191, E195, E227, and E231 each coordinate Mg(2+). S252 contacts substrate.

Belongs to the ketol-acid reductoisomerase family. The cofactor is Mg(2+).

The catalysed reaction is (2R)-2,3-dihydroxy-3-methylbutanoate + NADP(+) = (2S)-2-acetolactate + NADPH + H(+). The enzyme catalyses (2R,3R)-2,3-dihydroxy-3-methylpentanoate + NADP(+) = (S)-2-ethyl-2-hydroxy-3-oxobutanoate + NADPH + H(+). It participates in amino-acid biosynthesis; L-isoleucine biosynthesis; L-isoleucine from 2-oxobutanoate: step 2/4. Its pathway is amino-acid biosynthesis; L-valine biosynthesis; L-valine from pyruvate: step 2/4. Involved in the biosynthesis of branched-chain amino acids (BCAA). Catalyzes an alkyl-migration followed by a ketol-acid reduction of (S)-2-acetolactate (S2AL) to yield (R)-2,3-dihydroxy-isovalerate. In the isomerase reaction, S2AL is rearranged via a Mg-dependent methyl migration to produce 3-hydroxy-3-methyl-2-ketobutyrate (HMKB). In the reductase reaction, this 2-ketoacid undergoes a metal-dependent reduction by NADPH to yield (R)-2,3-dihydroxy-isovalerate. This chain is Ketol-acid reductoisomerase (NADP(+)), found in Paracoccus denitrificans (strain Pd 1222).